The sequence spans 208 residues: uncharacterized protein (208 aa).

A signal peptide spans 1-16; the sequence is MKFLLIACLAVPAILA. A glycan (N-linked (GlcNAc...) asparagine) is linked at asparagine 79.

This is an uncharacterized protein from Caenorhabditis elegans.